The following is a 418-amino-acid chain: Glutamyl-tRNA reductase (418 aa).

Residues 49–52, S109, 114–116, and Q120 each bind substrate; these read TCNR and EPQ. The active-site Nucleophile is C50. 189–194 provides a ligand contact to NADP(+); it reads GAGETI.

It belongs to the glutamyl-tRNA reductase family. In terms of assembly, homodimer.

The enzyme catalyses (S)-4-amino-5-oxopentanoate + tRNA(Glu) + NADP(+) = L-glutamyl-tRNA(Glu) + NADPH + H(+). It participates in porphyrin-containing compound metabolism; protoporphyrin-IX biosynthesis; 5-aminolevulinate from L-glutamyl-tRNA(Glu): step 1/2. Functionally, catalyzes the NADPH-dependent reduction of glutamyl-tRNA(Glu) to glutamate 1-semialdehyde (GSA). This is Glutamyl-tRNA reductase from Escherichia coli O139:H28 (strain E24377A / ETEC).